The following is a 625-amino-acid chain: tRNA uridine 5-carboxymethylaminomethyl modification enzyme MnmG (625 aa).

FAD is bound by residues 11–16 (GAGHAG), V123, and S178. NAD(+) is bound at residue 271 to 285 (GPRYCPSIETKIVTF). Q368 contacts FAD.

The protein belongs to the MnmG family. In terms of assembly, homodimer. Heterotetramer of two MnmE and two MnmG subunits. FAD serves as cofactor.

Its subcellular location is the cytoplasm. NAD-binding protein involved in the addition of a carboxymethylaminomethyl (cmnm) group at the wobble position (U34) of certain tRNAs, forming tRNA-cmnm(5)s(2)U34. The protein is tRNA uridine 5-carboxymethylaminomethyl modification enzyme MnmG of Bacteroides fragilis (strain ATCC 25285 / DSM 2151 / CCUG 4856 / JCM 11019 / LMG 10263 / NCTC 9343 / Onslow / VPI 2553 / EN-2).